Here is a 366-residue protein sequence, read N- to C-terminus: MSLTRKRGFYKQDINKTAWELPKTYLAPAHVGSGAYGAVCSAIDKRTGEKVAIKKLSRPFQSEIFAKRAYRELLLLKHMHHENVIGLLDVFTPASSLRSFHDFYLVMPFMQTDLQKIMGMEFSEDKVQYLVYQMLKGLKYIHSAGIVHRDLKPGNLAVNEDCELKILDFGLARHTDTEMTGYVVTRWYRAPEVILSWMHYNQTVDIWSVGCIMAEMLTGKTLFKGKDYLDQLTQILKVTGVPGAEFVQKLKDKAAKSYIQSLPQSPKKDFTQLFPRASPQAADLLDKMLELDVDKRLTAAQALAHPFFEPFRDPEEETEAQQPFDDALEHEKLSVDEWKQHIYKEISNFSPIARKDSRRRSGMKLQ.

Residues 25–308 (YLAPAHVGSG…AAQALAHPFF (284 aa)) form the Protein kinase domain. Residues 31–39 (VGSGAYGAV) and Lys-54 each bind ATP. The active-site Proton acceptor is the Asp-150. Phosphothreonine; by MAP2K3, MAP2K4, MAP2K6 and MAP2K7 is present on Thr-180. A TXY motif is present at residues 180-182 (TGY). The residue at position 182 (Tyr-182) is a Phosphotyrosine. Ser-350 is subject to Phosphoserine.

It belongs to the protein kinase superfamily. CMGC Ser/Thr protein kinase family. MAP kinase subfamily. As to quaternary structure, interacts with MAPK8IP2. Mg(2+) serves as cofactor. In terms of processing, dually phosphorylated on Thr-180 and Tyr-182 by MAP2K3/MKK3, MAP2K4/MKK4, MAP2K6/MKK6 and MAP2K7/MKK7, which activates the enzyme. Dephosphorylated by dual specificity phosphatase DUSP1.

The enzyme catalyses L-seryl-[protein] + ATP = O-phospho-L-seryl-[protein] + ADP + H(+). It catalyses the reaction L-threonyl-[protein] + ATP = O-phospho-L-threonyl-[protein] + ADP + H(+). Its activity is regulated as follows. Activated by phosphorylation on threonine and tyrosine by dual specificity kinases, MAP2K3/MKK3, MAP2K6/MKK6, MAP2K4/MKK4 and MAP2K7/MKK7. Activation by ultraviolet radiation, hyperosmotic shock, anisomycin or by TNF-alpha is mediated by MAP2K3/MKK3. Inhibited by dual specificity phosphatase DUSP1. Functionally, serine/threonine kinase which acts as an essential component of the MAP kinase signal transduction pathway. MAPK13 is one of the four p38 MAPKs which play an important role in the cascades of cellular responses evoked by extracellular stimuli such as pro-inflammatory cytokines or physical stress leading to direct activation of transcription factors such as ELK1 and ATF2. Accordingly, p38 MAPKs phosphorylate a broad range of proteins and it has been estimated that they may have approximately 200 to 300 substrates each. MAPK13 is one of the less studied p38 MAPK isoforms. Some of the targets are downstream kinases such as MAPKAPK2, which are activated through phosphorylation and further phosphorylate additional targets. Plays a role in the regulation of protein translation by phosphorylating and inactivating EEF2K. Involved in cytoskeletal remodeling through phosphorylation of MAPT and STMN1. Mediates UV irradiation induced up-regulation of the gene expression of CXCL14. Plays an important role in the regulation of epidermal keratinocyte differentiation, apoptosis and skin tumor development. Phosphorylates the transcriptional activator MYB in response to stress which leads to rapid MYB degradation via a proteasome-dependent pathway. MAPK13 also phosphorylates and down-regulates PRKD1 during regulation of insulin secretion in pancreatic beta cells. This chain is Mitogen-activated protein kinase 13 (Mapk13), found in Mus musculus (Mouse).